The chain runs to 95 residues: YcgL domain-containing protein APJL_0712 (95 aa).

A YcgL domain is found at 4-88 (HLCAIYKSPK…PPENLLKTFL (85 aa)).

The protein is YcgL domain-containing protein APJL_0712 of Actinobacillus pleuropneumoniae serotype 3 (strain JL03).